Here is an 80-residue protein sequence, read N- to C-terminus: Clavanin-C (80 aa).

The first 19 residues, 1 to 19 (MKTTILILLILGLGINAKS), serve as a signal peptide directing secretion. The propeptide occupies 20 to 29 (LEERKSEEEK). F52 bears the Phenylalanine amide mark. A propeptide spanning residues 54–80 (DDQQDNGKFYGHYAEDNGKHWYDTGDQ) is cleaved from the precursor.

In terms of tissue distribution, hemocytes and pharyngeal tissues.

The protein localises to the secreted. Functionally, has antimicrobial activity against E.coli, L.monocytogenes and C.albicans. This chain is Clavanin-C, found in Styela clava (Sea squirt).